The following is a 90-amino-acid chain: N(2)-fixation sustaining protein CowN (90 aa).

The protein belongs to the CowN family.

Is required to sustain N(2)-dependent growth in the presence of low levels of carbon monoxide (CO). Probably acts by protecting the N(2) fixation ability of the nitrogenase complex, which is inactivated in the presence of CO. The protein is N(2)-fixation sustaining protein CowN of Halorhodospira halophila (strain DSM 244 / SL1) (Ectothiorhodospira halophila (strain DSM 244 / SL1)).